Here is a 25-residue protein sequence, read N- to C-terminus: Hemocyanin subunit 3 (25 aa).

The protein belongs to the tyrosinase family. Hemocyanin subfamily. In terms of tissue distribution, hemolymph.

Its subcellular location is the secreted. It is found in the extracellular space. Hemocyanins are copper-containing oxygen carriers occurring freely dissolved in the hemolymph of many mollusks and arthropods. The chain is Hemocyanin subunit 3 from Maja squinado (Mediterranean spider crab).